The chain runs to 897 residues: Molybdenum import ATP-binding protein ModC 2 (897 aa).

The ABC transporter domain maps to 6 to 236 (RGRIDAAFRG…PALPLAYSRD (231 aa)). 38-45 (GPSGCGKT) serves as a coordination point for ATP. In terms of domain architecture, Mop spans 295–365 (ESSILNILPA…VKGVSLVRAS (71 aa)). A disordered region spans residues 823-848 (LGDRSVLGPREPDAGAKGRKRQNDPE). A compositionally biased stretch (basic and acidic residues) spans 832–848 (REPDAGAKGRKRQNDPE).

The protein belongs to the ABC transporter superfamily. Molybdate importer (TC 3.A.1.8) family. In terms of assembly, the complex is composed of two ATP-binding proteins (ModC), two transmembrane proteins (ModB) and a solute-binding protein (ModA).

It localises to the cell inner membrane. It catalyses the reaction molybdate(out) + ATP + H2O = molybdate(in) + ADP + phosphate + H(+). Part of the ABC transporter complex ModABC involved in molybdenum import. Responsible for energy coupling to the transport system. The polypeptide is Molybdenum import ATP-binding protein ModC 2 (Bradyrhizobium diazoefficiens (strain JCM 10833 / BCRC 13528 / IAM 13628 / NBRC 14792 / USDA 110)).